Here is a 602-residue protein sequence, read N- to C-terminus: UvrABC system protein C (602 aa).

One can recognise a GIY-YIG domain in the interval 17 to 94 (TTSGCYKMYS…IKEHKPDYNI (78 aa)). Positions 199–234 (SKLLDEIEIKMKEVIKREDFESAIKLKETKRSLIEI) constitute a UVR domain.

It belongs to the UvrC family. As to quaternary structure, interacts with UvrB in an incision complex.

The protein localises to the cytoplasm. Functionally, the UvrABC repair system catalyzes the recognition and processing of DNA lesions. UvrC both incises the 5' and 3' sides of the lesion. The N-terminal half is responsible for the 3' incision and the C-terminal half is responsible for the 5' incision. The polypeptide is UvrABC system protein C (Borrelia turicatae (strain 91E135)).